The following is a 284-amino-acid chain: Bifunctional protein FolD (284 aa).

NADP(+) is bound by residues G166–S168 and I232.

Belongs to the tetrahydrofolate dehydrogenase/cyclohydrolase family. Homodimer.

It carries out the reaction (6R)-5,10-methylene-5,6,7,8-tetrahydrofolate + NADP(+) = (6R)-5,10-methenyltetrahydrofolate + NADPH. The enzyme catalyses (6R)-5,10-methenyltetrahydrofolate + H2O = (6R)-10-formyltetrahydrofolate + H(+). Its pathway is one-carbon metabolism; tetrahydrofolate interconversion. In terms of biological role, catalyzes the oxidation of 5,10-methylenetetrahydrofolate to 5,10-methenyltetrahydrofolate and then the hydrolysis of 5,10-methenyltetrahydrofolate to 10-formyltetrahydrofolate. The chain is Bifunctional protein FolD from Shewanella halifaxensis (strain HAW-EB4).